We begin with the raw amino-acid sequence, 164 residues long: Lipoprotein signal peptidase (164 aa).

4 helical membrane passes run 6–26 (LGVLAGIVALVLDQVTKLWLL), 39–59 (VLPFFDLVLAWNTGISYGWFS), 65–85 (GQILMLAFKAVAIVALAIWMA), and 88–108 (TTKLATIGLGLIIGGAIGNAI). Catalysis depends on residues aspartate 118 and aspartate 140. The chain crosses the membrane as a helical span at residues 141–161 (VAIVVGVAALLYDSLIGLPAA).

It belongs to the peptidase A8 family.

It is found in the cell inner membrane. It carries out the reaction Release of signal peptides from bacterial membrane prolipoproteins. Hydrolyzes -Xaa-Yaa-Zaa-|-(S,diacylglyceryl)Cys-, in which Xaa is hydrophobic (preferably Leu), and Yaa (Ala or Ser) and Zaa (Gly or Ala) have small, neutral side chains.. The protein operates within protein modification; lipoprotein biosynthesis (signal peptide cleavage). This protein specifically catalyzes the removal of signal peptides from prolipoproteins. The protein is Lipoprotein signal peptidase of Rhodopseudomonas palustris (strain ATCC BAA-98 / CGA009).